The chain runs to 598 residues: Pentatricopeptide repeat-containing protein At5g14820, mitochondrial (598 aa).

The N-terminal 98 residues, 1-98 (MAAAPWLYLS…RGFSSGSSNV (98 aa)), are a transit peptide targeting the mitochondrion. 10 PPR repeats span residues 193–227 (DSRTYNSMMSILAKTRQFETMVSVLEEMGTKGLLT), 229–261 (ETFTIAMKAFAAAKERKKAVGIFELMKKYKFKI), 262–292 (GVETINCLLDSLGRAKLGKEAQVLFDKLKER), 296–330 (NMMTYTVLLNGWCRVRNLIEAARIWNDMIDHGLKP), 331–365 (DIVAHNVMLEGLLRSMKKSDAIKLFHVMKSKGPCP), 366–400 (NVRSYTIMIRDFCKQSSMETAIEYFDDMVDSGLQP), 401–435 (DAAVYTCLITGFGTQKKLDTVYELLKEMQEKGHPP), 436–470 (DGKTYNALIKLMANQKMPEHGTRIYNKMIQNEIEP), 471–505 (SIHTFNMIMKSYFVARNYEMGRAVWDEMIKKGICP), and 506–540 (DDNSYTVLIRGLISEGKSREACRYLEEMLDKGMKT).

Belongs to the PPR family. P subfamily.

The protein resides in the mitochondrion. This Arabidopsis thaliana (Mouse-ear cress) protein is Pentatricopeptide repeat-containing protein At5g14820, mitochondrial.